A 488-amino-acid chain; its full sequence is Intron-encoded DNA endonuclease I-AniI (488 aa).

The cobA exon 1 encoded stretch occupies residues 1–169; that stretch reads MRILKSHPLL…DIVEFIWGGL (169 aa). Residues 170–488 are cobA intron encoded; the sequence is YTDEPQCGDV…SEKIKIPSNY (319 aa).

It in the C-terminal section; belongs to the LAGLIDADG endonuclease family. Homodimer. Requires Mg(2+) as cofactor. Post-translationally, the mature protein may arise from proteolytic cleavage of an in-frame translation of cobA exon 1 plus intron, containing the I-AniI open reading frame. Cleavage may take place close to Met-213 resulting in an active endonuclease/maturase of about 30 kDa.

It is found in the mitochondrion. Mitochondrial DNA endonuclease and mRNA maturase involved in intron homing and required for splicing of the cytochrome b (cobA) gene intron, containing its own coding sequence. The protein stimulates the intrinsic ribozyme activity of the intron through binding to and stabilizing specific secondary and tertiary structure elements in the RNA. As an endonuclease it introduces a specific double-strand break at the junction of the two exons the cobA gene and thus mediates the insertion of an intron, containing its own coding sequence (group I intron), into an intronless gene. Recognizes with limited specificity and cleaves the sequence 5'-GAGGAGGTTTCTCTGTA-3'. The proteins RNA and DNA recognition and binding surfaces are independent. This is Intron-encoded DNA endonuclease I-AniI (I-AniI) from Emericella nidulans (Aspergillus nidulans).